Here is a 215-residue protein sequence, read N- to C-terminus: Ras-like GTP-binding protein RHO1 (215 aa).

6 residues coordinate GTP: Ala-30, Val-31, Gly-32, Lys-33, Thr-34, and Cys-35. Thr-34 is a Mg(2+) binding site. 2 short sequence motifs (switch) span residues 43–54 (GEIPTAYVPTVF) and 74–93 (DTAG…ADSD). Thr-52 contributes to the Mg(2+) binding site. GTP-binding residues include Asp-135 and Ser-166. The disordered stretch occupies residues 194-215 (VTTQAKSQESTQQKKKSKCLLQ). Low complexity predominate over residues 195–204 (TTQAKSQEST). Positions 206–215 (QKKKSKCLLQ) are enriched in basic residues. The residue at position 212 (Cys-212) is a Cysteine methyl ester. Cys-212 carries the S-geranylgeranyl cysteine lipid modification. Residues 213–215 (LLQ) constitute a propeptide, removed in mature form.

This sequence belongs to the small GTPase superfamily. Rho family. Interacts (GTP-bound form) with formin1 (via GBD/FH3 domain); the interaction activates formin1. Interacts (GTP-bound form) with profilin1. Interacts (GDP-bound form and when prenylated) with RhoGDI. It depends on Mg(2+) as a cofactor.

It localises to the cell membrane. The protein localises to the cytoplasm. It is found in the cytoskeleton. The protein resides in the cell projection. Its subcellular location is the phagocytic cup. It localises to the cytoplasmic vesicle. The protein localises to the phagosome. The enzyme catalyses GTP + H2O = GDP + phosphate + H(+). Its activity is regulated as follows. Regulated by guanine nucleotide exchange factors (GEFs) which promote the exchange of bound GDP for free GTP, GTPase activating proteins (GAPs) which increase the GTP hydrolysis activity and GDP dissociation inhibitors which inhibit the dissociation of the nucleotide from the GTPase. Functionally, small GTPase which cycles between active GTP-bound and inactive GDP-bound states. Involved in actin cytoskeleton remodeling. Regulates phagocytosis by modulating actin cytoskeleton dynamics through the recruitment of formin1 and profilin1 to the phagocytosis nucleation site. The protein is Ras-like GTP-binding protein RHO1 of Entamoeba histolytica (strain ATCC 30459 / HM-1:IMSS / ABRM).